The following is a 302-amino-acid chain: Protein FLOURY 1 (302 aa).

2 helical membrane-spanning segments follow: residues 27–47 and 82–102; these read SAGAGALYFLIGSGLGVVAVL and LAGSVGAQRLLLATSLLFLAV. Residues 160-195 are disordered; the sequence is SSKPVSRSLAAEFDQEADGEEEDNAGETSDPDDGSV. Residues 172–192 are compositionally biased toward acidic residues; sequence FDQEADGEEEDNAGETSDPDD. The region spanning 193 to 299 is the GTD-binding domain; sequence GSVQYLRRRL…ALSETSEDDR (107 aa). A coiled-coil region spans residues 199–254; that stretch reads RRRLKEEMLLKEVALEELEKERHAAASAADEAMSKIACLRSEKALVEREARQFQEM. Residues 283–302 are disordered; sequence PEAITDRALSETSEDDRDKK.

As to quaternary structure, interacts (via C-terminus) with both 22 kDa and 19 kDa alpha-zeins. Interacts (via C-terminus) with OP10 (via N-terminus). Expressed in endosperm. Not detected in embryo, leaves and roots.

The protein resides in the endoplasmic reticulum membrane. Involved in protein body development and 22 kDa alpha-zein localization. This Zea mays (Maize) protein is Protein FLOURY 1.